Reading from the N-terminus, the 116-residue chain is uncharacterized protein (116 aa).

Residues 1 to 21 (MAPSTAMLIMGLLKLPRLRLA) form the signal peptide.

This is an uncharacterized protein from Saccharomyces cerevisiae (strain ATCC 204508 / S288c) (Baker's yeast).